The chain runs to 233 residues: Ribonuclease 3 (233 aa).

The RNase III domain maps to 9 to 136 (LQHFWEQFHL…IIGSVYLSGG (128 aa)). Residue glutamate 49 participates in Mg(2+) binding. Aspartate 53 is a catalytic residue. Residues aspartate 122 and glutamate 125 each contribute to the Mg(2+) site. Glutamate 125 is an active-site residue. Residues 162-231 (DSKSALQEFV…ARAALALLKV (70 aa)) form the DRBM domain.

Belongs to the ribonuclease III family. As to quaternary structure, homodimer. Requires Mg(2+) as cofactor.

Its subcellular location is the cytoplasm. It catalyses the reaction Endonucleolytic cleavage to 5'-phosphomonoester.. Functionally, digests double-stranded RNA. Involved in the processing of primary rRNA transcript to yield the immediate precursors to the large and small rRNAs (23S and 16S). Processes some mRNAs, and tRNAs when they are encoded in the rRNA operon. Processes pre-crRNA and tracrRNA of type II CRISPR loci if present in the organism. The protein is Ribonuclease 3 of Moorella thermoacetica (strain ATCC 39073 / JCM 9320).